The following is a 377-amino-acid chain: uncharacterized protein (377 aa).

4 helical membrane passes run 26–46 (TFQN…VVAI), 67–87 (TVGS…WVII), 108–128 (FLTF…ISLT), and 135–155 (IDYG…ALYI).

It localises to the cell membrane. This is an uncharacterized protein from Methanocaldococcus jannaschii (strain ATCC 43067 / DSM 2661 / JAL-1 / JCM 10045 / NBRC 100440) (Methanococcus jannaschii).